The following is a 494-amino-acid chain: Ectonucleoside triphosphate diphosphohydrolase 8 (494 aa).

Residues 1-8 (MRLSWKER) lie on the Cytoplasmic side of the membrane. A helical transmembrane segment spans residues 9 to 29 (VFMVLLGVAAASGLTMLILIL). Residues 30–465 (VKATNVLLPA…LTQWRAQSYS (436 aa)) lie on the Extracellular side of the membrane. Residues cysteine 78 and cysteine 102 are joined by a disulfide bond. Residue glutamate 168 is the Proton acceptor of the active site. Cysteines 245 and 291 form a disulfide. 2 N-linked (GlcNAc...) asparagine glycosylation sites follow: asparagine 299 and asparagine 303. An intrachain disulfide couples cysteine 328 to cysteine 334. A glycan (N-linked (GlcNAc...) asparagine) is linked at asparagine 362. Cysteine 380 and cysteine 402 are disulfide-bonded. A helical transmembrane segment spans residues 466–486 (IWIAGVVFAVLTLVAILGAAA). Over 487-494 (VQLFWTQD) the chain is Cytoplasmic.

The protein belongs to the GDA1/CD39 NTPase family. It depends on Ca(2+) as a cofactor. Mg(2+) is required as a cofactor. N-glycosylated. As to expression, present in liver, and at lower level in jejunum and kidney. Limited to the canalicular domain of hepatocytes (at protein level).

The protein localises to the cell membrane. The enzyme catalyses a ribonucleoside 5'-triphosphate + 2 H2O = a ribonucleoside 5'-phosphate + 2 phosphate + 2 H(+). In terms of biological role, canalicular ectonucleoside NTPDase responsible for the main hepatic NTPDase activity. Ectonucleoside NTPDases catalyze the hydrolysis of gamma- and beta-phosphate residues of nucleotides, playing a central role in concentration of extracellular nucleotides. Has activity toward ATP, ADP, UTP and UDP, but not toward AMP. The polypeptide is Ectonucleoside triphosphate diphosphohydrolase 8 (Entpd8) (Rattus norvegicus (Rat)).